We begin with the raw amino-acid sequence, 89 residues long: Small ribosomal subunit protein uS15 (89 aa).

A disordered region spans residues M1 to S24. A compositionally biased stretch (basic and acidic residues) spans Q7 to P19.

The protein belongs to the universal ribosomal protein uS15 family. As to quaternary structure, part of the 30S ribosomal subunit. Forms a bridge to the 50S subunit in the 70S ribosome, contacting the 23S rRNA.

One of the primary rRNA binding proteins, it binds directly to 16S rRNA where it helps nucleate assembly of the platform of the 30S subunit by binding and bridging several RNA helices of the 16S rRNA. Its function is as follows. Forms an intersubunit bridge (bridge B4) with the 23S rRNA of the 50S subunit in the ribosome. This is Small ribosomal subunit protein uS15 from Halorhodospira halophila (strain DSM 244 / SL1) (Ectothiorhodospira halophila (strain DSM 244 / SL1)).